A 142-amino-acid polypeptide reads, in one-letter code: Hdr-like menaquinol oxidoreductase cytochrome c subunit (142 aa).

Residues 1 to 6 (MYNKKY) lie on the Cytoplasmic side of the membrane. The chain crosses the membrane as a helical span at residues 7-27 (VIPLILVFLIGFFTPYWYNAM). At 28-142 (AGTLGHVPTL…GIEELSKYFS (115 aa)) the chain is on the extracellular side. Heme contacts are provided by cysteine 93, cysteine 96, histidine 97, cysteine 104, cysteine 107, histidine 108, cysteine 117, cysteine 120, and histidine 121.

Consists of five subunits: an integral membrane subunit, a cytochrome b-like subunit, a cytochrome c subunit and two iron-sulfur subunits. Binds 3 heme groups per subunit.

It is found in the cell membrane. Functionally, has menaquinol-oxidizing activity. HmeA, HmeB and HmeE subunits may together catalyze electron transfer from menaquinol to cytochrome c. This Archaeoglobus fulgidus (strain ATCC 49558 / DSM 4304 / JCM 9628 / NBRC 100126 / VC-16) protein is Hdr-like menaquinol oxidoreductase cytochrome c subunit (hmeE).